Consider the following 1026-residue polypeptide: Vacuolar protein sorting-associated protein 18 homolog (1026 aa).

Residues 858–896 are a coiled coil; the sequence is IVDFLKRNKQRLEKLERSMKEATEIASEIRDKQEKLKNR. The segment at 906–932 adopts an RING-type; degenerate zinc-finger fold; the sequence is CSHCARPISGRAFNVHSCRHFFHRECL.

In terms of assembly, probable core component of at least two putative endosomal tethering complexes, the homotypic fusion and vacuole protein sorting (HOPS) complex and the class C core vacuole/endosome tethering (CORVET) complex. Their common core is composed of the class C Vps proteins vps-11, vps-16 and vps-18, which in HOPS further associates with vps-33.1, vps-39 and vps-41 and in CORVET with vps-8 and vps-33.2. As to expression, in hermaphrodites, expressed in coelomocytes and gonadal sheath cells.

It is found in the cytoplasm. The protein localises to the late endosome membrane. The protein resides in the lysosome membrane. It localises to the early endosome. Its subcellular location is the cytoplasmic vesicle. It is found in the autophagosome. The protein localises to the clathrin-coated vesicle. Functionally, plays a role in vesicle-mediated protein trafficking to lysosomal compartments including the endocytic membrane transport and autophagic pathways. Believed to act as a core component of the putative HOPS and CORVET endosomal tethering complexes which are proposed to be involved in the rab-5-to-rab-7 endosome conversion probably implicating sand-1, and via binding SNAREs and SNARE complexes to mediate tethering and docking events during SNARE-mediated membrane fusion. The HOPS complex is proposed to be recruited to rab-7 on the late endosomal membrane and to regulate late endocytic, phagocytic and autophagic traffic towards lysosomes. Within the HOPS complex, contributes to the normal development of gut granules in intestinal cells of the embryo, and also promotes the trafficking of embryonic intestinal gut granules away from lysosomes. The CORVET complex is proposed to function as a rab-5 effector to mediate early endosome fusion probably in specific endosome subpopulations. Required for fusion of endosomes and autophagosomes with lysosomes. Plays a role in the degradation of apoptotic cells during programmed cell death. This Caenorhabditis elegans protein is Vacuolar protein sorting-associated protein 18 homolog.